The primary structure comprises 401 residues: Glucose/mannose transporter GlcP (401 aa).

12 helical membrane-spanning segments follow: residues 11 to 31 (AFFF…PFLL), 43 to 63 (VIIF…PLMI), 78 to 98 (IMLV…IIVM), 99 to 119 (AFLL…FVIA), 132 to 152 (EVLF…FIDI), 156 to 176 (FLPY…WLIF), 212 to 232 (LGFF…FANF), 247 to 267 (LISV…IGFV), 278 to 298 (LFSC…SNPI), 306 to 326 (LIGL…SIII), 336 to 356 (LFIA…GWSL), and 360 to 380 (TILL…GISV).

This sequence belongs to the major facilitator superfamily.

It localises to the cell membrane. In terms of biological role, can transport glucose, mannose, 2-deoxyglucose and methyl alpha-glucoside, but not galactose. The polypeptide is Glucose/mannose transporter GlcP (glcP) (Bacillus subtilis (strain 168)).